Here is a 1242-residue protein sequence, read N- to C-terminus: ATP-dependent helicase/nuclease subunit A (1242 aa).

A UvrD-like helicase ATP-binding domain is found at 12–487 (SRWTDEQWKA…IDLASNFRSR (476 aa)). 33 to 40 (AAAGSGKT) is a binding site for ATP. The UvrD-like helicase C-terminal domain maps to 514-808 (AAQLKYGADY…RVMTIHSSKG (295 aa)).

This sequence belongs to the helicase family. AddA subfamily. In terms of assembly, heterodimer of AddA and AddB/RexB. The cofactor is Mg(2+).

It catalyses the reaction Couples ATP hydrolysis with the unwinding of duplex DNA by translocating in the 3'-5' direction.. The catalysed reaction is ATP + H2O = ADP + phosphate + H(+). Functionally, the heterodimer acts as both an ATP-dependent DNA helicase and an ATP-dependent, dual-direction single-stranded exonuclease. Recognizes the chi site generating a DNA molecule suitable for the initiation of homologous recombination. The AddA nuclease domain is required for chi fragment generation; this subunit has the helicase and 3' -&gt; 5' nuclease activities. In Geobacillus thermodenitrificans (strain NG80-2), this protein is ATP-dependent helicase/nuclease subunit A.